A 67-amino-acid polypeptide reads, in one-letter code: Metallothionein-B (67 aa).

It belongs to the metallothionein superfamily. Type 4 family.

Metallothioneins have a high content of cysteine residues that bind various heavy metals. The chain is Metallothionein-B from Sphaerechinus granularis (Purple sea urchin).